The following is a 150-amino-acid chain: UPF0756 membrane protein Dd703_1075 (150 aa).

4 helical membrane passes run 8-28, 51-71, 81-101, and 114-134; these read LLIL…TITL, YGLS…IASG, AFLN…SWLG, and VVAG…GVPV.

Belongs to the UPF0756 family.

It localises to the cell membrane. This chain is UPF0756 membrane protein Dd703_1075, found in Musicola paradisiaca (strain Ech703) (Dickeya paradisiaca).